Reading from the N-terminus, the 290-residue chain is Zinc finger protein-like 1 homolog (290 aa).

The segment at 1–43 (MGLCKCPKRQVTTQFCFEHRVNVCENCMVVNHTKCTVQSYIQW) adopts a B box-type; degenerate zinc-finger fold. The RING-type; atypical zinc-finger motif lies at 53–101 (CPLCGSPLDNEDCVRLICYHVFHWKCLNAKQQSLPANTAPGGHTCPTCS). The span at 156 to 168 (NGNTFASSMSQTR) shows a compositional bias: polar residues. The tract at residues 156–175 (NGNTFASSMSQTRSNERPES) is disordered. The chain crosses the membrane as a helical span at residues 249–269 (WFLVLGGCIGFVCIIYVLATL).

It belongs to the ZFPL1 family.

It is found in the membrane. The chain is Zinc finger protein-like 1 homolog from Aedes aegypti (Yellowfever mosquito).